The sequence spans 534 residues: Probable protein kinase UbiB (534 aa).

The helical transmembrane segment at 23-43 threads the bilayer; the sequence is DLLFDLPLPWFLLALRYVLPW. A Protein kinase domain is found at 125–492; that stretch reads RFDVEPLASA…WKKRKDDWFL (368 aa). Residues 131–139 and Lys-153 contribute to the ATP site; that span reads LASASVAQV. The active-site Proton acceptor is the Asp-288. The next 2 membrane-spanning stretches (helical) occupy residues 490–510 and 512–532; these read WFLR…AAGG and LHEL…YLVV.

This sequence belongs to the ABC1 family. UbiB subfamily.

The protein localises to the cell inner membrane. It functions in the pathway cofactor biosynthesis; ubiquinone biosynthesis [regulation]. In terms of biological role, is probably a protein kinase regulator of UbiI activity which is involved in aerobic coenzyme Q (ubiquinone) biosynthesis. The chain is Probable protein kinase UbiB from Pseudomonas fluorescens (strain Pf0-1).